The sequence spans 128 residues: Secreted RxLR effector protein 57 (128 aa).

Residues 1–31 form the signal peptide; that stretch reads MHRKRLRVVLSATLLDLITCVQLMLDPLVRS. Residues 58-61 carry the RxLR motif; sequence RILR.

Belongs to the RxLR effector family.

It localises to the secreted. It is found in the host nucleus. The protein localises to the host cytoplasm. Functionally, secreted effector that completely suppresses the host cell death induced by cell death-inducing proteins. The protein is Secreted RxLR effector protein 57 of Plasmopara viticola (Downy mildew of grapevine).